Consider the following 183-residue polypeptide: NEDD8-conjugating enzyme Ubc12 (183 aa).

Met-1 carries the N-acetylmethionine modification. Residues 1 to 28 are disordered; that stretch reads MIKLFSLKQQKKEEESAGGTKGSSKKAS. Positions 29 to 173 constitute a UBC core domain; sequence AAQLRIQKDI…VQRSMRGGYI (145 aa). The active-site Glycyl thioester intermediate is Cys-111.

Belongs to the ubiquitin-conjugating enzyme family. UBC12 subfamily. Post-translationally, the acetylation of Met-1 increases affinity for DCUN1D1 by about 2 orders of magnitude and is crucial for NEDD8 transfer to cullins.

The catalysed reaction is [E1 NEDD8-activating enzyme]-S-[NEDD8 protein]-yl-L-cysteine + [E2 NEDD8-conjugating enzyme]-L-cysteine = [E1 NEDD8-activating enzyme]-L-cysteine + [E2 NEDD8-conjugating enzyme]-S-[NEDD8-protein]-yl-L-cysteine.. The protein operates within protein modification; protein neddylation. In terms of biological role, accepts the ubiquitin-like protein NEDD8 from the UBA3-NAE1 E1 complex and catalyzes its covalent attachment to other proteins. The specific interaction with the E3 ubiquitin ligase rbx1, but not rbx2, suggests that the rbx1-ube2m complex neddylates specific target proteins, such as cul1, cul2, cul3 and cul4. Involved in cell proliferation. This chain is NEDD8-conjugating enzyme Ubc12 (ube2m), found in Xenopus laevis (African clawed frog).